The following is a 194-amino-acid chain: Phosphoheptose isomerase (194 aa).

One can recognise an SIS domain in the interval 37-194 (ISNSFKQGGK…LIEFEMAKQA (158 aa)). 52-54 (NGG) lines the substrate pocket. The Zn(2+) site is built by His61 and Glu65. Substrate is bound by residues Glu65, 93–94 (ND), 119–121 (STS), Ser124, and Gln172. Zn(2+)-binding residues include Gln172 and His180.

It belongs to the SIS family. GmhA subfamily. Homotetramer. Zn(2+) serves as cofactor.

The protein resides in the cytoplasm. The enzyme catalyses 2 D-sedoheptulose 7-phosphate = D-glycero-alpha-D-manno-heptose 7-phosphate + D-glycero-beta-D-manno-heptose 7-phosphate. The protein operates within carbohydrate biosynthesis; D-glycero-D-manno-heptose 7-phosphate biosynthesis; D-glycero-alpha-D-manno-heptose 7-phosphate and D-glycero-beta-D-manno-heptose 7-phosphate from sedoheptulose 7-phosphate: step 1/1. Its pathway is bacterial outer membrane biogenesis; LOS core biosynthesis. Its function is as follows. Catalyzes the isomerization of sedoheptulose 7-phosphate in D-glycero-D-manno-heptose 7-phosphate. The sequence is that of Phosphoheptose isomerase from Haemophilus influenzae (strain ATCC 51907 / DSM 11121 / KW20 / Rd).